The sequence spans 167 residues: NADH-quinone oxidoreductase subunit B 2 (167 aa).

[4Fe-4S] cluster is bound by residues C38, C39, C104, and C133.

This sequence belongs to the complex I 20 kDa subunit family. As to quaternary structure, NDH-1 is composed of 14 different subunits. Subunits NuoB, C, D, E, F, and G constitute the peripheral sector of the complex. Requires [4Fe-4S] cluster as cofactor.

Its subcellular location is the cell membrane. It catalyses the reaction a quinone + NADH + 5 H(+)(in) = a quinol + NAD(+) + 4 H(+)(out). Its function is as follows. NDH-1 shuttles electrons from NADH, via FMN and iron-sulfur (Fe-S) centers, to quinones in the respiratory chain. The immediate electron acceptor for the enzyme in this species is believed to be ubiquinone. Couples the redox reaction to proton translocation (for every two electrons transferred, four hydrogen ions are translocated across the cytoplasmic membrane), and thus conserves the redox energy in a proton gradient. The protein is NADH-quinone oxidoreductase subunit B 2 of Roseiflexus sp. (strain RS-1).